The chain runs to 77 residues: Serine protease inhibitor 2 (77 aa).

The first 17 residues, 1–17 (MMFTPLIVLTLLVLATA), serve as a signal peptide directing secretion. 5 disulfides stabilise this stretch: Cys21–Cys53, Cys30–Cys48, Cys33–Cys44, Cys37–Cys74, and Cys55–Cys68. A TIL domain is found at 21 to 74 (CGPNEQWSDCPKCELQCGESDKPCATICGEPKCYCSPDKYRRIPDGRCIRKIQC).

The protein localises to the secreted. Functionally, defends the organism against the host's proteinases. The polypeptide is Serine protease inhibitor 2 (Anisakis simplex (Herring worm)).